We begin with the raw amino-acid sequence, 180 residues long: Shikimate kinase (180 aa).

14 to 19 is a binding site for ATP; it reads GAGKTC. Mg(2+) is bound at residue threonine 18. 3 residues coordinate substrate: aspartate 36, arginine 60, and glycine 82. Position 120 (arginine 120) interacts with ATP. Arginine 139 contributes to the substrate binding site.

Belongs to the shikimate kinase family. In terms of assembly, monomer. Mg(2+) is required as a cofactor.

It localises to the cytoplasm. It carries out the reaction shikimate + ATP = 3-phosphoshikimate + ADP + H(+). It functions in the pathway metabolic intermediate biosynthesis; chorismate biosynthesis; chorismate from D-erythrose 4-phosphate and phosphoenolpyruvate: step 5/7. Its function is as follows. Catalyzes the specific phosphorylation of the 3-hydroxyl group of shikimic acid using ATP as a cosubstrate. The chain is Shikimate kinase from Stenotrophomonas maltophilia (strain K279a).